A 1312-amino-acid polypeptide reads, in one-letter code: AT-rich interactive domain-containing protein 4B (1312 aa).

Disordered regions lie at residues 124–166 (PLTN…EDDR) and 266–306 (KTEL…EPFP). Phosphoserine is present on residues Ser276, Ser295, and Ser296. A compositionally biased stretch (acidic residues) spans 277–305 (EAEEEEEEEDDEKEKEDNSSEEEEEIEPF). One can recognise an ARID domain in the interval 306 to 398 (PEERENFLQQ…YLYGFEEYCR (93 aa)). Glycyl lysine isopeptide (Lys-Gly) (interchain with G-Cter in SUMO2) cross-links involve residues Lys429, Lys440, and Lys462. Disordered stretches follow at residues 458–577 (EIER…KVQV), 635–680 (IKHR…EMVS), 708–894 (QASE…TTGF), 909–1212 (LNNS…NRLP), and 1252–1288 (SEVA…SITA). The tract at residues 465–473 (IKPSLGSKK) is antigenic epitope. Phosphoserine is present on Ser483. Over residues 483–496 (SDQEKEVNIKKPED) the composition is skewed to basic and acidic residues. Lys517 is covalently cross-linked (Glycyl lysine isopeptide (Lys-Gly) (interchain with G-Cter in SUMO2)). Residues 532-567 (NKEEDEDDEEAEEEEEEEEEEEDEDDDDNNEEEEFE) show a composition bias toward acidic residues. The region spanning 572-624 (GMKVQVRYGRGKNQKMYEASIKDSDVEGGEVLYLVHYCGWNVRYDEWIKADKI) is the Tudor-knot domain. A compositionally biased stretch (basic and acidic residues) spans 643-656 (NKLDKEKDKDEKYS). Phosphoserine is present on residues Ser666, Ser675, and Ser717. Composition is skewed to basic and acidic residues over residues 722–754 (ERGA…KEEQ) and 778–787 (SPERLRKDIE). The stretch at 728–754 (MDNNGKEESKIDHLTNNRNDLISKEEQ) forms a coiled coil. Lys751 participates in a covalent cross-link: Glycyl lysine isopeptide (Lys-Gly) (interchain with G-Cter in SUMO2). Ser778 and Ser790 each carry phosphoserine. Residues 788–799 (VLSEDTDYEEDE) show a composition bias toward acidic residues. A Phosphothreonine modification is found at Thr793. Basic and acidic residues-rich tracts occupy residues 807 to 816 (VKKDTTDKSS), 828 to 852 (CNTE…KESL), 909 to 927 (LNNS…RKDV), and 995 to 1010 (KPIE…RKAE). Ser1014 carries the phosphoserine modification. Thr1026 is subject to Phosphothreonine. Positions 1028–1037 (ESPSSVTVTE) are enriched in low complexity. The residue at position 1029 (Ser1029) is a Phosphoserine. Over residues 1038 to 1047 (GSRQQSSVTV) the composition is skewed to polar residues. The segment covering 1056-1065 (EEVRSIKSET) has biased composition (basic and acidic residues). Over residues 1087–1101 (SSPAGFDASVSSSSS) the composition is skewed to low complexity. Residues 1130–1137 (KKQKRSHK) are antigenic epitope. Over residues 1130 to 1148 (KKQKRSHKATVVNNKKKGK) the composition is skewed to basic residues. At Thr1150 the chain carries Phosphothreonine. 4 positions are modified to phosphoserine: Ser1152, Ser1153, Ser1155, and Ser1159. Residues 1162–1191 (ESITKSQPVKSVSTGMKSHSTKSPARTQSP) show a composition bias toward polar residues. Over residues 1196–1208 (KNGDKDPDLKEPS) the composition is skewed to basic and acidic residues. Positions 1231–1270 (ERITILQEKLQEIRKHYLSLKSEVASIDRRRKRLKKKERE) form a coiled coil. The segment covering 1272 to 1288 (AATSSSSSSPSSSSITA) has biased composition (low complexity).

As to quaternary structure, component of a Sin3A corepressor complex consisting of SIN3A, SAP130, SUDS3/SAP45, SAP180, HDAC1 and HDAC2. Interacts with ARID4A. Interacts with AR. As to expression, highly expressed in the testis and in breast, lung, colon, pancreatic and ovarian cancers. Expressed at low levels in the thymus, prostate and ovary.

It is found in the nucleus. The protein localises to the cytoplasm. In terms of biological role, acts as a transcriptional repressor. May function in the assembly and/or enzymatic activity of the Sin3A corepressor complex or in mediating interactions between the complex and other regulatory complexes. Plays a role in the regulation of epigenetic modifications at the PWS/AS imprinting center near the SNRPN promoter, where it might function as part of a complex with RB1 and ARID4A. Involved in spermatogenesis, together with ARID4A, where it functions as a transcriptional coactivator for AR (androgen receptor) and enhances expression of genes required for sperm maturation. Regulates expression of the tight junction protein CLDN3 in the testis, which is important for integrity of the blood-testis barrier. Plays a role in myeloid homeostasis where it regulates the histone methylation state of bone marrow cells and expression of various genes involved in hematopoiesis. May function as a leukemia suppressor. The sequence is that of AT-rich interactive domain-containing protein 4B (ARID4B) from Homo sapiens (Human).